A 782-amino-acid polypeptide reads, in one-letter code: Chaoptin (782 aa).

LRR repeat units follow at residues 16–37, 43–64, 67–88, 93–114, 117–138, 141–162, 165–186, 191–212, 224–245, 249–270, 273–294, 297–318, 321–342, 344–364, 370–391, 395–416, 419–442, 446–467, 468–488, 491–512, 514–535, and 539–560; these read SLLT…PSDA, RLEE…SFHF, SLKK…TFQG, DLTE…TFAD, QLEQ…AFMN, SLKR…TFQN, ELED…IFDQ, GMFH…PSVP, NIKV…FFRP, SLMQ…LFGN, HLQV…TFRN, KLQW…LFRF, NLRI…LFRE, GLER…TSLS, TLSE…GQLA, CLSW…TFKG, RLAS…SFQG, TLLH…STPN, LLSL…VAGN, SLRY…THSL, ELRH…SLLG, and QLEE…AFCK. 3 N-linked (GlcNAc...) asparagine glycosylation sites follow: Asn196, Asn234, and Asn262. 2 N-linked (GlcNAc...) asparagine glycosylation sites follow: Asn454 and Asn488. An N-linked (GlcNAc...) asparagine glycan is attached at Asn530. Residues Asn618, Asn648, and Asn667 are each glycosylated (N-linked (GlcNAc...) asparagine).

Belongs to the chaoptin family.

The protein localises to the cell membrane. Required for photoreceptor cell morphogenesis. Mediates homophilic cellular adhesion. The polypeptide is Chaoptin (CHP) (Tribolium castaneum (Red flour beetle)).